Here is a 695-residue protein sequence, read N- to C-terminus: Follicle-stimulating hormone receptor (695 aa).

The signal sequence occupies residues 1–17 (MALLLVSLLAFLSLGSG). 2 disulfides stabilise this stretch: Cys-18/Cys-25 and Cys-23/Cys-32. Residues 18-46 (CHHRICHCSNRVFLCQESKVTEIPSDLPR) form the LRRNT domain. The Extracellular portion of the chain corresponds to 18–366 (CHHRICHCSN…EDIMGYNILR (349 aa)). 9 LRR repeats span residues 49–72 (IELRFVLTKLRVIQKGAFSGFGDL), 73–97 (EKIEISQNDVLEVIEADVFSNLPKL), 98–118 (HEIRIEKANNLLYINPEAFQN), 119–143 (LPNLQYLLISNTGIKHLPDVHKIHS), 144–169 (LQKVLLDIQDNINIHTIERNSFVGLS), 170–192 (FESVILWLNKNGIQEIHNCAFNG), 193–216 (TQLDELNLSDNNNLEELPNDVFHG), 217–240 (ASGPVILDISRTRIHSLPSYGLEN), and 241–259 (LKKLRARSTYNLKKLPTLE). N-linked (GlcNAc...) asparagine glycosylation is found at Asn-191 and Asn-199. Intrachain disulfides connect Cys-275–Cys-346, Cys-276–Cys-292, Cys-276–Cys-356, and Cys-292–Cys-338. N-linked (GlcNAc...) asparagine glycans are attached at residues Asn-293 and Asn-318. Position 335 is a sulfotyrosine (Tyr-335). A helical membrane pass occupies residues 367–387 (VLIWFISILAITGNIIVLVIL). Over 388–398 (TTSQYKLTVPR) the chain is Cytoplasmic. A helical transmembrane segment spans residues 399–421 (FLMCNLAFADLCIGIYLLLIASV). Residues 422–443 (DIHTKSQYHNYAIDWQTGAGCD) are Extracellular-facing. Residues Cys-442 and Cys-517 are joined by a disulfide bond. The chain crosses the membrane as a helical span at residues 444 to 465 (AAGFFTVFASELSVYTLTAITL). Over 466 to 485 (ERWHTITHAMQLDCKVQLRH) the chain is Cytoplasmic. A helical membrane pass occupies residues 486-508 (AASVMVMGWIFAFAAALFPIFGI). The Extracellular portion of the chain corresponds to 509–528 (SSYMKVSICLPMDIDSPLSQ). The chain crosses the membrane as a helical span at residues 529–550 (LYVMSLLVLNVLAFVVICGCYI). Over 551-573 (HIYLTVRNPNIVSSSSDTRIAKR) the chain is Cytoplasmic. A helical membrane pass occupies residues 574–597 (MAMLIFTDFLCMAPISFFAISASL). Residues 598-608 (KVPLITVSKAK) lie on the Extracellular side of the membrane. Residues 609 to 630 (ILLVLFHPINSCANPFLYAIFT) form a helical membrane-spanning segment. Residues 631-695 (KNFRRDFFIL…LVPLSHLAQN (65 aa)) are Cytoplasmic-facing.

It belongs to the G-protein coupled receptor 1 family. FSH/LSH/TSH subfamily. Homotrimer. Functions as a homotrimer binding the FSH hormone heterodimer composed of CGA and FSHB. Interacts with ARRB2. Interacts with APPL2; interaction is independent of follicle stimulating hormone stimulation. Post-translationally, sulfated. N-glycosylated; indirectly required for FSH-binding, possibly via a conformational change that allows high affinity binding of hormone. In terms of tissue distribution, sertoli cells and ovarian granulosa cells.

The protein localises to the cell membrane. Functionally, g protein-coupled receptor for follitropin, the follicle-stimulating hormone. Through cAMP production activates the downstream PI3K-AKT and ERK1/ERK2 signaling pathways. The protein is Follicle-stimulating hormone receptor (FSHR) of Homo sapiens (Human).